A 136-amino-acid chain; its full sequence is Beta-hordothionin (136 aa).

Residues 1-27 (MGSKGLKGVMVCLLILGLVLEHVQVEG) form the signal peptide. 4 disulfide bridges follow: Cys-30/Cys-66, Cys-31/Cys-58, Cys-39/Cys-56, and Cys-43/Cys-52. Residues 73–136 (LALVSNSDEP…GDVGLTSLTA (64 aa)) constitute a propeptide, acidic domain.

Belongs to the plant thionin (TC 1.C.44) family. 4 C-C subfamily. Homodimer.

The protein resides in the secreted. In terms of biological role, thionins are small plant proteins which are toxic to animal cells. They seem to exert their toxic effect at the level of the cell membrane. Their precise function is not known. This is Beta-hordothionin (THI1.2) from Hordeum vulgare (Barley).